Consider the following 277-residue polypeptide: Myelin proteolipid protein (277 aa).

Over Gly-2–Cys-10 the chain is Cytoplasmic. 3 S-palmitoyl cysteine lipidation sites follow: Cys-6, Cys-7, and Cys-10. A helical transmembrane segment spans residues Leu-11–Gly-36. Residues His-37–Glu-59 lie on the Extracellular side of the membrane. A helical membrane pass occupies residues Tyr-60 to Ala-88. Topologically, residues Glu-89–Lys-151 are cytoplasmic. S-palmitoyl cysteine attachment occurs at residues Cys-109, Cys-139, and Cys-141. A helical transmembrane segment spans residues Phe-152 to Phe-178. The Extracellular segment spans residues Asn-179–His-238. Disulfide bonds link Cys-184–Cys-228 and Cys-201–Cys-220. Residue Thr-199 is the site of O-palmitoyl threonine attachment. Residues Leu-239–Leu-268 form a helical membrane-spanning segment. The Cytoplasmic portion of the chain corresponds to Lys-269 to Phe-277.

The protein belongs to the myelin proteolipid protein family.

Its subcellular location is the cell membrane. This is the major myelin protein from the central nervous system. It plays an important role in the formation or maintenance of the multilamellar structure of myelin. The protein is Myelin proteolipid protein (PLP1) of Gallus gallus (Chicken).